The following is a 307-amino-acid chain: Transposase InsD for insertion element IS2-9 (307 aa).

In terms of domain architecture, Integrase catalytic spans 112 to 295; that stretch reads KPAVPPSKRA…SPREYLRQRA (184 aa).

Functionally, involved in the transposition of the insertion sequence IS2. The polypeptide is Transposase InsD for insertion element IS2-9 (Escherichia coli (strain K12)).